Here is a 254-residue protein sequence, read N- to C-terminus: MALPLLEYKLSSQNHRVKSFGVADQNEDTPYIYRLEDVSSFTDIQNIIWAAYRQVFSEHEILRFNRQKHLESQLKSGLITVRDFIRGLAKSEAFYRLVVSVNNNYRLVDVVLKRLLGRSAYNKEEEIAWSIVIGTKGFDGFVDAIVDSDEYTQAFGDNTVPYQRKRLVDRPHNLVTPRYGEDFQETAGTVKTDWRFTLQNFYSRKFQERQLREGDPRKYTDMAAAIAPKGNYAQNIRAADLDYLNLVPSRTRRF.

A PBS-linker domain is found at 11–191 (SSQNHRVKSF…DFQETAGTVK (181 aa)).

It belongs to the phycobilisome linker protein family. As to quaternary structure, the phycobilisome is a hemidiscoidal structure that is composed of two distinct substructures: a core complex and a number of rods radiating from the core.

It is found in the cellular thylakoid membrane. In terms of biological role, rod-core linker protein required for attachment of phycocyanin to allophycocyanin in cores of phycobilisomes. Functionally, linker polypeptides determine the state of aggregation and the location of the disk-shaped phycobiliprotein units within the phycobilisome and modulate their spectroscopic properties in order to mediate a directed and optimal energy transfer. The sequence is that of Phycobilisome rod-core linker polypeptide CpcG3 (cpcG3) from Mastigocladus laminosus (Fischerella sp.).